We begin with the raw amino-acid sequence, 171 residues long: UPF0398 protein MGAS10270_Spy1470 (171 aa).

This sequence belongs to the UPF0398 family.

The protein is UPF0398 protein MGAS10270_Spy1470 of Streptococcus pyogenes serotype M2 (strain MGAS10270).